A 368-amino-acid chain; its full sequence is F-box/kelch-repeat protein At2g44700 (368 aa).

A disordered region spans residues 1 to 23 (MSSSNEPPRKTDQPSSSSASASA). Residues 14-23 (PSSSSASASA) show a composition bias toward low complexity. The 47-residue stretch at 25 to 71 (PSLFLSLPLEIISMILARVPKRYYPILCSVSKNMRSLVRSPEIHKAR) folds into the F-box domain. A Kelch repeat occupies 177-221 (KVYVIGGYQDDEIAAESFDLNTQTWEAAPIPDEKESHRWICKANV).

The polypeptide is F-box/kelch-repeat protein At2g44700 (Arabidopsis thaliana (Mouse-ear cress)).